Reading from the N-terminus, the 372-residue chain is O-methyltransferase bfoE (372 aa).

Position 186 (tryptophan 186) interacts with S-adenosyl-L-methionine. The active-site Proton acceptor is histidine 285.

The protein belongs to the class I-like SAM-binding methyltransferase superfamily. Cation-independent O-methyltransferase family.

It participates in secondary metabolite biosynthesis. Its function is as follows. Cytochrome P450 monooxygenase; part of the gene cluster that mediates the biosynthesis of bifonsecin B, a dimeric gamma-naphthopyrone. The first step in the biosynthesis of bifonsecin B is the production of gamma-naphthopyrone precursor YWA1 by the non-reducing polyketide synthase albA, via condensation of one acetyl-CoA starter unit with 6 malonyl-CoA units. YWA1 is then methylated by bfoE at position C-6 to yield foncesin which is further methylated at position C-8 by bfoD to produce fonsecin B. A key enzyme in the biosynthetic pathway is the cytochrome P450 monooxygenase bfoB which catalyzes the oxidative dimerization of fonsecin B to bifonsecin B. Bfob also catalyzes the oxidative dimerization of rubrofusarin B into nigerone. The stereoselectivity of bfoB is influenced by the two natural monomeric substrates; homodimerization of fonsecin B yields a stereochemically pure biaryl, M-foncerine B, while rubrofusarin B yields a mixture of enantiomers M- and P-nigerone. In Aspergillus brasiliensis (strain CBS 101740 / IMI 381727 / IBT 21946), this protein is O-methyltransferase bfoE.